The sequence spans 136 residues: uncharacterized protein (136 aa).

This is an uncharacterized protein from Saccharomyces cerevisiae (strain ATCC 204508 / S288c) (Baker's yeast).